We begin with the raw amino-acid sequence, 319 residues long: ATP-dependent 6-phosphofructokinase (319 aa).

Glycine 11 provides a ligand contact to ATP. Residue 21–25 (RAVVR) coordinates ADP. Residues 72 to 73 (RC) and 102 to 105 (GDGS) each bind ATP. Aspartate 103 contributes to the Mg(2+) binding site. 125-127 (TID) lines the substrate pocket. Residue aspartate 127 is the Proton acceptor of the active site. An ADP-binding site is contributed by arginine 154. Substrate-binding positions include arginine 162 and 169–171 (MGR). ADP-binding positions include 185–187 (GAE), arginine 211, and 213–215 (KKH). Substrate-binding positions include glutamate 222, arginine 243, and 249–252 (HVQR).

The protein belongs to the phosphofructokinase type A (PFKA) family. ATP-dependent PFK group I subfamily. Prokaryotic clade 'B1' sub-subfamily. Homotetramer. Requires Mg(2+) as cofactor.

It localises to the cytoplasm. The enzyme catalyses beta-D-fructose 6-phosphate + ATP = beta-D-fructose 1,6-bisphosphate + ADP + H(+). Its pathway is carbohydrate degradation; glycolysis; D-glyceraldehyde 3-phosphate and glycerone phosphate from D-glucose: step 3/4. Allosterically activated by ADP and other diphosphonucleosides, and allosterically inhibited by phosphoenolpyruvate. Catalyzes the phosphorylation of D-fructose 6-phosphate to fructose 1,6-bisphosphate by ATP, the first committing step of glycolysis. This is ATP-dependent 6-phosphofructokinase from Bacillus cytotoxicus (strain DSM 22905 / CIP 110041 / 391-98 / NVH 391-98).